Here is a 310-residue protein sequence, read N- to C-terminus: Methionyl-tRNA formyltransferase (310 aa).

111 to 114 contacts (6S)-5,6,7,8-tetrahydrofolate; the sequence is SLLP.

It belongs to the Fmt family.

The catalysed reaction is L-methionyl-tRNA(fMet) + (6R)-10-formyltetrahydrofolate = N-formyl-L-methionyl-tRNA(fMet) + (6S)-5,6,7,8-tetrahydrofolate + H(+). Its function is as follows. Attaches a formyl group to the free amino group of methionyl-tRNA(fMet). The formyl group appears to play a dual role in the initiator identity of N-formylmethionyl-tRNA by promoting its recognition by IF2 and preventing the misappropriation of this tRNA by the elongation apparatus. The protein is Methionyl-tRNA formyltransferase of Rhodopseudomonas palustris (strain TIE-1).